The following is a 73-amino-acid chain: uncharacterized protein (73 aa).

The signal sequence occupies residues 1-28; the sequence is MKFLLSVIAGLLILALYLFWKVQPPVWI.

This is an uncharacterized protein from Bacillus subtilis (strain 168).